The primary structure comprises 436 residues: Alpha-2 adrenergic receptor (436 aa).

Residues 1-27 (MDVTQSNATKDDANITVTPWPYTETAA) are Extracellular-facing. N-linked (GlcNAc...) asparagine glycosylation is found at N7 and N14. Residues 28 to 52 (AFIILVVSVIILVSIVGNVLVIVAV) traverse the membrane as a helical segment. Residues 53 to 64 (LTSRALRAPQNL) are Cytoplasmic-facing. Residues 65 to 90 (FLVSLACADILVATLVIPFSLANEIM) traverse the membrane as a helical segment. Residues 91–100 (GYWFFGSTWC) lie on the Extracellular side of the membrane. A disulfide bond links C100 and C173. Residues 101–123 (AFYLALDVLFCTSSIVHLCAISL) form a helical membrane-spanning segment. Residues 124–144 (DRYWSVTKAVSYNLKRTPKRI) are Cytoplasmic-facing. The chain crosses the membrane as a helical span at residues 145 to 167 (KSMIAVVWVISAVISFPPLIMTK). The Extracellular segment spans residues 168–178 (HDEKECLINDE). The helical transmembrane segment at 179–202 (TWYILSSSLVSFFAPGFIMITVYC) threads the bilayer. Residues 203–329 (KIYRVAKQRS…QMREKRFTFV (127 aa)) lie on the Cytoplasmic side of the membrane. Positions 238–280 (KFEKESPSSNSSESNQRQEELDDIDLEESATSDNKPKSSRFSN) are disordered. Over residues 257–267 (ELDDIDLEESA) the composition is skewed to acidic residues. Residues 330–353 (LTVVMGVFVLCWFPFFFTYSLHAI) traverse the membrane as a helical segment. Topologically, residues 354–366 (CGDSCEPPEALFK) are extracellular. Residues 367 to 387 (LFFWIGYCNSSVNPIIYTIFN) traverse the membrane as a helical segment. Residues 388–436 (RDFRKAFKKICLLDCAAHLRDSCLGTLGRLNAKCIFECHQKSNQEETAN) lie on the Cytoplasmic side of the membrane.

This sequence belongs to the G-protein coupled receptor 1 family.

Its subcellular location is the cell membrane. Functionally, alpha-2 adrenergic receptors mediate the catecholamine-induced inhibition of adenylate cyclase through the action of G proteins. In Carassius auratus (Goldfish), this protein is Alpha-2 adrenergic receptor.